The primary structure comprises 104 residues: N(2)-fixation sustaining protein CowN (104 aa).

This sequence belongs to the CowN family.

In terms of biological role, is required to sustain N(2)-dependent growth in the presence of low levels of carbon monoxide (CO). Probably acts by protecting the N(2) fixation ability of the nitrogenase complex, which is inactivated in the presence of CO. The chain is N(2)-fixation sustaining protein CowN from Arcobacter nitrofigilis (strain ATCC 33309 / DSM 7299 / CCUG 15893 / LMG 7604 / NCTC 12251 / CI) (Campylobacter nitrofigilis).